A 36-amino-acid chain; its full sequence is Potassium channel toxin alpha-KTx 1.9 (36 aa).

Belongs to the short scorpion toxin superfamily. Potassium channel inhibitor family. Alpha-KTx 01 subfamily. As to expression, expressed by the venom gland.

Its subcellular location is the secreted. Functionally, potent selective inhibitor of Kv1/KCNA voltage-gated potassium channels. This is Potassium channel toxin alpha-KTx 1.9 from Centruroides limbatus (Bark scorpion).